A 351-amino-acid polypeptide reads, in one-letter code: MITLAVDCMGGDHGPRVTLAACRAFLDHHPDARLLLVGQTDSLRSFTHARAALVAATEVVAMDDSVEVALRKKKDSSMRVAIQQVKDGAASAAVSAGNTGALMAIARYLLKTLDGIDRPAIATQLPNARGGATTVLDLGANVDCSAEHLLQFAVMGSALVSALQEGGEPTVGLLNIGQEAIKGSEIIKRAGELLRSAAQCGDLNFHGNVEGDDIFKGSVDIVVCDGFVGNVALKASEGLAAMIIGALKIEFSRHVFAKMAAIVAYPVLQALMKRMDYRRYNGAALLGLRGLVFKSHGSADAMAFEQALNRAYDAARNNLLDRVRARIAHAAPLLAPADAQPKPDIAATTHR.

The protein belongs to the PlsX family. Homodimer. Probably interacts with PlsY.

Its subcellular location is the cytoplasm. The enzyme catalyses a fatty acyl-[ACP] + phosphate = an acyl phosphate + holo-[ACP]. The protein operates within lipid metabolism; phospholipid metabolism. Its function is as follows. Catalyzes the reversible formation of acyl-phosphate (acyl-PO(4)) from acyl-[acyl-carrier-protein] (acyl-ACP). This enzyme utilizes acyl-ACP as fatty acyl donor, but not acyl-CoA. The polypeptide is Phosphate acyltransferase (Verminephrobacter eiseniae (strain EF01-2)).